The sequence spans 221 residues: Tumor protein p53-inducible nuclear protein 2 (221 aa).

Positions 26-41 (VSEEDEVDGWLIIDLQ) match the LIR motif. A disordered region spans residues 41 to 68 (QDSYTAPPDPGASPAPAGRPPPAPSLMD). Residues 47–64 (PPDPGASPAPAGRPPPAP) show a composition bias toward pro residues. Residue Ser-136 is modified to Phosphoserine. The interval 177 to 210 (RQRAERHTLSAKVLQRQNRARESRSRRPKHQGSF) is disordered.

Interacts with VMP1, GABARAP, GABARAPL1, GABARAPL2, MAP1LC3A, MAP1LC3B, MAP1LC3C and THRA.

The protein resides in the cytoplasm. It localises to the cytosol. It is found in the nucleus. Its subcellular location is the PML body. The protein localises to the cytoplasmic vesicle. The protein resides in the autophagosome. Functionally, dual regulator of transcription and autophagy. Positively regulates autophagy and is required for autophagosome formation and processing. May act as a scaffold protein that recruits MAP1LC3A, GABARAP and GABARAPL2 and brings them to the autophagosome membrane by interacting with VMP1 where, in cooperation with the BECN1-PI3-kinase class III complex, they trigger autophagosome development. Acts as a transcriptional activator of THRA. The protein is Tumor protein p53-inducible nuclear protein 2 (Tp53inp2) of Mus musculus (Mouse).